A 474-amino-acid polypeptide reads, in one-letter code: Uronate isomerase (474 aa).

The protein belongs to the metallo-dependent hydrolases superfamily. Uronate isomerase family.

It catalyses the reaction D-glucuronate = D-fructuronate. It carries out the reaction aldehydo-D-galacturonate = keto-D-tagaturonate. Its pathway is carbohydrate metabolism; pentose and glucuronate interconversion. The protein is Uronate isomerase of Photorhabdus laumondii subsp. laumondii (strain DSM 15139 / CIP 105565 / TT01) (Photorhabdus luminescens subsp. laumondii).